The following is a 694-amino-acid chain: Elongation factor G (694 aa).

The 283-residue stretch at 6–288 folds into the tr-type G domain; sequence KLYRNIGIAA…GVIEYLPSPT (283 aa). GTP is bound by residues 15–22, 86–90, and 140–143; these read AHVDAGKT, DTPGH, and NKMD.

This sequence belongs to the TRAFAC class translation factor GTPase superfamily. Classic translation factor GTPase family. EF-G/EF-2 subfamily.

The protein resides in the cytoplasm. Functionally, catalyzes the GTP-dependent ribosomal translocation step during translation elongation. During this step, the ribosome changes from the pre-translocational (PRE) to the post-translocational (POST) state as the newly formed A-site-bound peptidyl-tRNA and P-site-bound deacylated tRNA move to the P and E sites, respectively. Catalyzes the coordinated movement of the two tRNA molecules, the mRNA and conformational changes in the ribosome. The chain is Elongation factor G from Legionella pneumophila subsp. pneumophila (strain Philadelphia 1 / ATCC 33152 / DSM 7513).